The sequence spans 185 residues: MTNEIRKDAETRMDKCVEAFKNQISKIRTGRASPSILDGIQVEYYGSATPLRQVANVVVEDSRTLAITVFDRTLGPAVEKAIMASDLGLNPSSAGTVIRVPLPPLTEERRKDLIKVVRGEAEQGRVSVRNVRRDANDKLKALLKDKAISEDEERRAQDDVQKLTDNFIKKVDTALAEKEAELMEF.

It belongs to the RRF family.

It is found in the cytoplasm. Functionally, responsible for the release of ribosomes from messenger RNA at the termination of protein biosynthesis. May increase the efficiency of translation by recycling ribosomes from one round of translation to another. This is Ribosome-recycling factor from Pectobacterium carotovorum subsp. carotovorum (strain PC1).